A 399-amino-acid chain; its full sequence is Inositol polyphosphate 1-phosphatase (399 aa).

Asp54 is a Li(+) binding site. Mg(2+) is bound at residue Glu79. Glu80 contributes to the Li(+) binding site. The Mg(2+) site is built by Asp153 and Ile155. Asp156, Ser157, Thr158, Ser267, Lys269, Gly289, Ala290, Lys293, and Thr311 together coordinate 1D-myo-inositol 1,4-bisphosphate. Residue Asp316 participates in Mg(2+) binding. Ser317 is subject to Phosphoserine.

The protein belongs to the inositol monophosphatase superfamily. Monomer. Mg(2+) is required as a cofactor. Ubiquitously expressed, with highest levels in pancreas and kidney.

The enzyme catalyses 1D-myo-inositol 1,4-bisphosphate + H2O = 1D-myo-inositol 4-phosphate + phosphate. The catalysed reaction is 1D-myo-inositol 1,3,4-trisphosphate + H2O = 1D-myo-inositol 3,4-bisphosphate + phosphate. Its pathway is signal transduction; phosphatidylinositol signaling pathway. Inhibited by Li(+). Mg(2+)-dependent phosphatase that catalyzes the hydrolysis of the 1-position phosphate from inositol 1,4-bisphosphate and inositol 1,3,4-trisphosphate and participates in inositol phosphate metabolism. This Homo sapiens (Human) protein is Inositol polyphosphate 1-phosphatase.